The sequence spans 717 residues: Patatin-like phospholipase domain-containing protein PGUG_03164 (717 aa).

Residues 123-143 (WPFLIIITVWILLLCILYTVV) traverse the membrane as a helical segment. Residues 298–490 (LCLSGGACFA…RTDIPIDALK (193 aa)) form the PNPLA domain. The GXSXG motif lies at 329–333 (GTSGG). The active-site Nucleophile is S331. The Proton acceptor role is filled by D477. Positions 680–717 (YDSESSAEETLSPGFSQGTHAVLTDESDDDSSDDEIDD) are disordered. The span at 704–717 (DESDDDSSDDEIDD) shows a compositional bias: acidic residues.

Belongs to the PLPL family.

The protein resides in the membrane. Functionally, probable lipid hydrolase. In Meyerozyma guilliermondii (strain ATCC 6260 / CBS 566 / DSM 6381 / JCM 1539 / NBRC 10279 / NRRL Y-324) (Yeast), this protein is Patatin-like phospholipase domain-containing protein PGUG_03164.